The following is a 119-amino-acid chain: Large ribosomal subunit protein bL19 (119 aa).

The protein belongs to the bacterial ribosomal protein bL19 family.

Functionally, this protein is located at the 30S-50S ribosomal subunit interface and may play a role in the structure and function of the aminoacyl-tRNA binding site. In Limosilactobacillus fermentum (strain NBRC 3956 / LMG 18251) (Lactobacillus fermentum), this protein is Large ribosomal subunit protein bL19.